Reading from the N-terminus, the 229-residue chain is Uracil-DNA glycosylase (229 aa).

Asp-64 acts as the Proton acceptor in catalysis.

Belongs to the uracil-DNA glycosylase (UDG) superfamily. UNG family.

It is found in the cytoplasm. The enzyme catalyses Hydrolyzes single-stranded DNA or mismatched double-stranded DNA and polynucleotides, releasing free uracil.. Excises uracil residues from the DNA which can arise as a result of misincorporation of dUMP residues by DNA polymerase or due to deamination of cytosine. The sequence is that of Uracil-DNA glycosylase from Escherichia fergusonii (strain ATCC 35469 / DSM 13698 / CCUG 18766 / IAM 14443 / JCM 21226 / LMG 7866 / NBRC 102419 / NCTC 12128 / CDC 0568-73).